The sequence spans 394 residues: MNKKTVRDVDVKGKRVFCRVDFNVPMENGAITDDTRIRAALPTIRYLMEQGAKVILASHLGRPKGKVVEELRLNAVARRLSELLGKHVTKTDEAYGDAVKEAISKMNEGDVLLLENVRFYPGEEKNDPELAKAFAELADIYVNDAFGAAHRAHASTEGIAHYLPAVAGFLMEKEIEVLGKALSNPDRPFTAIIGGAKVKDKIGVIENLLNKVDNLIIGGGLAYTFVKALGHEIGKSLLEEDKIELAKSFMEKAKEKGVNFYMPVDVVVADRFANDANTKVVSIDAIPSDWEALDIGPKTRELYRDVIMKSKLVVWNGPMGVFEMDAFAEGTKAVAQALADAVDTYSVIGGGDSAAAVEKFGLAEKMDHISTGGGASLEFMEGKQLPGVVALNDK.

Substrate-binding positions include 21–23, arginine 36, 59–62, arginine 118, and arginine 151; these read DFN and HLGR. Serine 183 carries the post-translational modification Phosphoserine. Position 201 (lysine 201) interacts with ATP. Threonine 299 carries the phosphothreonine modification. ATP contacts are provided by residues glutamate 323 and 350 to 353; that span reads GGDS.

Belongs to the phosphoglycerate kinase family. Monomer.

The protein resides in the cytoplasm. The catalysed reaction is (2R)-3-phosphoglycerate + ATP = (2R)-3-phospho-glyceroyl phosphate + ADP. It participates in carbohydrate degradation; glycolysis; pyruvate from D-glyceraldehyde 3-phosphate: step 2/5. The protein is Phosphoglycerate kinase of Geobacillus sp. (strain WCH70).